We begin with the raw amino-acid sequence, 739 residues long: MSVSESAVFAYESSVHSTNVLLSLNDQRKKDVLCDVTVLVEGQRFRAHRSVLAACSSYFHSRIVGQTDAELTVTLPEEVTVKGFEPLIQFAYTAKLILSKDNVDEVCRCVEFLSVHNIEESCFQFLKFKFLDSTSEQQECARKKCFSSHCQKADFKFSFSEQKDLEIDEADEFLEKKRVQTPQCDSRRCQGSVKASPPLQDSVSQACQSLCTDKDGALALPSLCPKYRKFQKAFGTDKIRTLESGVRDVHTASVQPNETSELECFGGAQGCADLHVILKCEGMKAAMESEDTEGQDPSPQCPAEQPQGTPLPQDSAGPHGLYSLSALHTYEQSGDVAFAGVQSKTVKTEKPLSRPDAQDEKPSENQDLYLKSSMGPKEDSSSLASEDRSSVEREVAEHLAKGFWSDICSTDSPCQMQLSPTVAKDGPEQGYSQRRSECPWLGIRISESPEPGQRTFTTLSSVNCPFISTLSSEGCSSNLEIGNYDYVSEPQQEPCPYACVISLGDDSETDTEGDSESCSAREQDCEVKLPFNAQRIISLSRNDFQSLLKMHKLTPEQLDCIHDIRRRSKNRIAAQRCRKRKLDCIQNLESEIEKLQSEKESLLKERDHILSTLGETKQNLTGLCQQVCKEAALSPEQIQILAKYSASDCPLSFLISEKGKSTPDGELAFTSVFSVSDVPPTAPPPCGRGSSAASQELVQESPPTTAAAPEQATLLEPCRQSAGISDFCQQMSDKCTTDE.

The 67-residue stretch at 34–100 (CDVTVLVEGQ…AYTAKLILSK (67 aa)) folds into the BTB domain. Phosphoserine is present on serine 196. 2 disordered regions span residues 287–321 (MESE…PHGL) and 344–391 (KTVK…RSSV). 2 stretches are compositionally biased toward basic and acidic residues: residues 346–364 (VKTE…KPSE) and 376–391 (PKED…RSSV). Position 448 is a phosphoserine (serine 448). The bZIP domain occupies 560 to 623 (CIHDIRRRSK…GETKQNLTGL (64 aa)). The interval 565 to 581 (RRRSKNRIAAQRCRKRK) is basic motif. Residues 585 to 592 (IQNLESEI) form a leucine-zipper region. The disordered stretch occupies residues 679 to 708 (PPTAPPPCGRGSSAASQELVQESPPTTAAA). The span at 699–708 (QESPPTTAAA) shows a compositional bias: low complexity.

This sequence belongs to the bZIP family. CNC subfamily. Heterodimer of BACH1 and MAFK. Post-translationally, ubiquitinated by the SCF(FBXL17) complex or by the by the SCF(FBXO22) complex, leading to its degradation by the proteasome. Under oxidative stress, reactive oxygen species covalently modify cysteine residues on the bZIP domain of BACH1 and release it from chromatin. If the BTB domain of BACH1 remains intact, its beta1-alpha6 degron is recognized by FBXO22, promoting its ubiquitination and degradation. If the structural integrity of the beta1-alpha6 degron is compromised, FBXL17 will transiently associate with the BACH1 BTB dimer and remodel it into stably bound monomer for ubiquitination and degradation. As to expression, ubiquitous.

It is found in the nucleus. Functionally, transcriptional regulator that acts as a repressor or activator, depending on the context. Binds to NF-E2 DNA binding sites. Plays important roles in coordinating transcription activation and repression by MAFK. Together with MAF, represses the transcription of genes under the control of the NFE2L2 oxidative stress pathway. In Mus musculus (Mouse), this protein is Transcription regulator protein BACH1 (Bach1).